Reading from the N-terminus, the 263-residue chain is Methylesterase 4 (263 aa).

Serine 84 serves as the catalytic Acyl-ester intermediate. Residues aspartate 213 and histidine 241 each act as charge relay system in the active site.

The protein belongs to the AB hydrolase superfamily. Methylesterase family.

It catalyses the reaction methyl salicylate + H2O = salicylate + methanol + H(+). It functions in the pathway plant hormone biosynthesis. With respect to regulation, esterase activity is down-regulated by salicylic acid (SA). In terms of biological role, methylesterase shown to have carboxylesterase activity and methyl salicylate (MeSA) esterase activity in vitro. This is Methylesterase 4 from Arabidopsis thaliana (Mouse-ear cress).